The chain runs to 548 residues: Zinc metalloproteinase dpy-31 (548 aa).

An N-terminal signal peptide occupies residues 1 to 24 (MSLLRSASLLLVVVTAALPPCTLG). Residues 25–150 (YSLHDGSRLD…KTGQRRVKRK (126 aa)) constitute a propeptide that is removed on maturation. The 200-residue stretch at 150–349 (KFIGSDLRRW…IRLMNKIYCS (200 aa)) folds into the Peptidase M12A domain. N190 carries N-linked (GlcNAc...) asparagine glycosylation. 5 disulfide bridges follow: C193–C348, C216–C237, C352–C372, C374–C383, and C394–C422. H245 is a Zn(2+) binding site. Residue E246 is part of the active site. 2 residues coordinate Zn(2+): H249 and H255. One can recognise an EGF-like domain in the interval 344–384 (NKIYCSNVCSRKLPCQRGGYTDPRRCDRCRCPDGFTGQFCE). Residues 394 to 510 (CGGRIQVNSG…RGFEARARAL (117 aa)) form the CUB domain. N-linked (GlcNAc...) asparagine glycosylation occurs at N461. The region spanning 513–547 (NGQWASWTPWTPCTASCGACGSRMRTRVCPHGACP) is the TSP type-1 domain. 3 disulfides stabilise this stretch: C525–C546, C529–C546, and C541–C546.

Zn(2+) serves as cofactor.

It is found in the secreted. In terms of biological role, metalloprotease which cleaves the carboxyl terminus of procollagens to mature collagens. Probably involved in cuticular collagen maturation. This is Zinc metalloproteinase dpy-31 from Haemonchus contortus (Barber pole worm).